We begin with the raw amino-acid sequence, 314 residues long: Homoserine kinase (314 aa).

Residue 95–105 (PHSRGLGSSAA) coordinates ATP.

It belongs to the GHMP kinase family. Homoserine kinase subfamily.

Its subcellular location is the cytoplasm. It catalyses the reaction L-homoserine + ATP = O-phospho-L-homoserine + ADP + H(+). The protein operates within amino-acid biosynthesis; L-threonine biosynthesis; L-threonine from L-aspartate: step 4/5. Its function is as follows. Catalyzes the ATP-dependent phosphorylation of L-homoserine to L-homoserine phosphate. This is Homoserine kinase from Mycobacterium sp. (strain JLS).